The primary structure comprises 332 residues: L-lactate dehydrogenase A chain (332 aa).

Ala-2 is modified (N-acetylalanine). Lys-5 carries the N6-acetyllysine; alternate modification. Lys-5 bears the N6-succinyllysine; alternate mark. Lys-14 bears the N6-acetyllysine mark. Residue 29 to 57 participates in NAD(+) binding; it reads GAVGMACAISILMKDLADELALVDVMEDK. N6-acetyllysine; alternate is present on Lys-57. Lys-57 participates in a covalent cross-link: Glycyl lysine isopeptide (Lys-Gly) (interchain with G-Cter in SUMO2); alternate. Lys-81 carries the N6-acetyllysine modification. NAD(+) is bound at residue Arg-99. Residue Arg-106 coordinates substrate. An N6-acetyllysine; alternate modification is found at Lys-118. The residue at position 118 (Lys-118) is an N6-succinyllysine; alternate. At Lys-126 the chain carries N6-acetyllysine. Asn-138 is a binding site for NAD(+). Substrate-binding residues include Asn-138 and Arg-169. The Proton acceptor role is filled by His-193. Residues Lys-224 and Lys-232 each carry the N6-acetyllysine modification. Tyr-239 is subject to Phosphotyrosine. N6-acetyllysine is present on Lys-243. Residue Thr-248 coordinates substrate. Thr-309 bears the Phosphothreonine mark. Ser-310 carries the post-translational modification Phosphoserine. Lys-318 carries the post-translational modification N6-acetyllysine; alternate. Lys-318 bears the N6-succinyllysine; alternate mark. Thr-322 carries the phosphothreonine modification.

This sequence belongs to the LDH/MDH superfamily. LDH family. In terms of assembly, homotetramer. Interacts with PTEN upstream reading frame protein MP31. ISGylated.

The protein localises to the cytoplasm. It catalyses the reaction (S)-lactate + NAD(+) = pyruvate + NADH + H(+). It functions in the pathway fermentation; pyruvate fermentation to lactate; (S)-lactate from pyruvate: step 1/1. Its function is as follows. Interconverts simultaneously and stereospecifically pyruvate and lactate with concomitant interconversion of NADH and NAD(+). The polypeptide is L-lactate dehydrogenase A chain (LDHA) (Oryctolagus cuniculus (Rabbit)).